The following is a 194-amino-acid chain: Peptidyl-tRNA hydrolase (194 aa).

Residue tyrosine 17 coordinates tRNA. Histidine 22 (proton acceptor) is an active-site residue. Positions 68, 70, and 116 each coordinate tRNA.

This sequence belongs to the PTH family. In terms of assembly, monomer.

The protein resides in the cytoplasm. It catalyses the reaction an N-acyl-L-alpha-aminoacyl-tRNA + H2O = an N-acyl-L-amino acid + a tRNA + H(+). In terms of biological role, hydrolyzes ribosome-free peptidyl-tRNAs (with 1 or more amino acids incorporated), which drop off the ribosome during protein synthesis, or as a result of ribosome stalling. Its function is as follows. Catalyzes the release of premature peptidyl moieties from peptidyl-tRNA molecules trapped in stalled 50S ribosomal subunits, and thus maintains levels of free tRNAs and 50S ribosomes. In Azotobacter vinelandii (strain DJ / ATCC BAA-1303), this protein is Peptidyl-tRNA hydrolase.